The sequence spans 644 residues: Fidgetin-like protein 2 (644 aa).

2 disordered regions span residues methionine 1–proline 36 and alanine 285–glycine 323. Residues proline 10–serine 27 show a composition bias toward polar residues. The segment covering alanine 285–alanine 294 has biased composition (low complexity). ATP contacts are provided by residues alanine 390 and glycine 430–leucine 435.

Belongs to the AAA ATPase family. Mg(2+) is required as a cofactor.

It is found in the cytoplasm. The protein localises to the cell cortex. It catalyses the reaction ATP + H2O = ADP + phosphate + H(+). In terms of biological role, microtubule-severing enzyme that negatively regulates cell migration and wound healing. In migrating cells, targets dynamic microtubules (MTs) at the leading edge and severs them, thereby suppressing motility. Microtubule severing releases ARHGEF2 which activates RHOA, which in turn regulates focal ahesion turnover via focal adhesion kinase, as opposed to F-actin polymerization, to suppress cell motility. Negative regulator of axon regeneration that suppresses axonal growth by selectively severing dynamic MTs in the distal axon shaft and growth cone. Contributes to proper cell branching during endothelial and neuronal development. In Mus musculus (Mouse), this protein is Fidgetin-like protein 2 (Fignl2).